A 517-amino-acid polypeptide reads, in one-letter code: Arp2/3 complex-activating protein rickA (517 aa).

2 disordered regions span residues 313–441 and 461–517; these read LENN…SKPA and KVSD…SFVR. Composition is skewed to pro residues over residues 319–340 and 347–378; these read PPSPLPENNIPSPPPPPPPSPL and SSPPPPPPPPLPENNIPSPPPPPPPPPPPPMA. In terms of domain architecture, WH2 spans 406 to 423; the sequence is DTSDLMREIAGPKKLKKV. The segment at 444-477 is central and acidic domains; sequence VNALSGLESIFARRAVIKVSDSSSSESDSGNWSD. Over residues 463–479 the composition is skewed to low complexity; the sequence is SDSSSSESDSGNWSDVS. Positions 500-517 are enriched in polar residues; the sequence is THAQKINNRNSQNPSFVR.

Homodimer.

The protein resides in the cell surface. Its function is as follows. Recruits and activates the Arp2/3 complex, which in turn leads to actin polymerization, promoting Rickettsia motility during infection. The sequence is that of Arp2/3 complex-activating protein rickA (rickA) from Rickettsia conorii (strain ATCC VR-613 / Malish 7).